Consider the following 298-residue polypeptide: Spermidine synthase (298 aa).

The 236-residue stretch at 13–248 (DGWFREINNM…GSIGFVVASK (236 aa)) folds into the PABS domain. Q44 serves as a coordination point for S-adenosyl 3-(methylsulfanyl)propylamine. Y74 contacts putrescine. Residues Q75, D99, D119, 150-151 (DG), and D168 each bind S-adenosyl 3-(methylsulfanyl)propylamine. D168 (proton acceptor) is an active-site residue. Putrescine-binding positions include 168-171 (DSSD) and Y236.

Belongs to the spermidine/spermine synthase family.

The catalysed reaction is S-adenosyl 3-(methylsulfanyl)propylamine + putrescine = S-methyl-5'-thioadenosine + spermidine + H(+). The protein operates within amine and polyamine biosynthesis; spermidine biosynthesis; spermidine from putrescine: step 1/1. The polypeptide is Spermidine synthase (Schizosaccharomyces pombe (strain 972 / ATCC 24843) (Fission yeast)).